The primary structure comprises 561 residues: Dihydroxy-acid dehydratase 3 (561 aa).

Cys50 is a binding site for [2Fe-2S] cluster. Asp82 is a Mg(2+) binding site. A [2Fe-2S] cluster-binding site is contributed by Cys123. Mg(2+) contacts are provided by Asp124 and Lys125. Position 125 is an N6-carboxylysine (Lys125). Cys195 is a binding site for [2Fe-2S] cluster. Position 447 (Glu447) interacts with Mg(2+). Ser473 serves as the catalytic Proton acceptor.

Belongs to the IlvD/Edd family. As to quaternary structure, homodimer. The cofactor is [2Fe-2S] cluster. It depends on Mg(2+) as a cofactor.

It carries out the reaction (2R)-2,3-dihydroxy-3-methylbutanoate = 3-methyl-2-oxobutanoate + H2O. The catalysed reaction is (2R,3R)-2,3-dihydroxy-3-methylpentanoate = (S)-3-methyl-2-oxopentanoate + H2O. The protein operates within amino-acid biosynthesis; L-isoleucine biosynthesis; L-isoleucine from 2-oxobutanoate: step 3/4. It participates in amino-acid biosynthesis; L-valine biosynthesis; L-valine from pyruvate: step 3/4. Its function is as follows. Functions in the biosynthesis of branched-chain amino acids. Catalyzes the dehydration of (2R,3R)-2,3-dihydroxy-3-methylpentanoate (2,3-dihydroxy-3-methylvalerate) into 2-oxo-3-methylpentanoate (2-oxo-3-methylvalerate) and of (2R)-2,3-dihydroxy-3-methylbutanoate (2,3-dihydroxyisovalerate) into 2-oxo-3-methylbutanoate (2-oxoisovalerate), the penultimate precursor to L-isoleucine and L-valine, respectively. This is Dihydroxy-acid dehydratase 3 from Bordetella bronchiseptica (strain ATCC BAA-588 / NCTC 13252 / RB50) (Alcaligenes bronchisepticus).